We begin with the raw amino-acid sequence, 239 residues long: Ribonuclease PH (239 aa).

Residues Arg86 and 124–126 (GTR) each bind phosphate.

The protein belongs to the RNase PH family. As to quaternary structure, homohexameric ring arranged as a trimer of dimers.

The catalysed reaction is tRNA(n+1) + phosphate = tRNA(n) + a ribonucleoside 5'-diphosphate. Functionally, phosphorolytic 3'-5' exoribonuclease that plays an important role in tRNA 3'-end maturation. Removes nucleotide residues following the 3'-CCA terminus of tRNAs; can also add nucleotides to the ends of RNA molecules by using nucleoside diphosphates as substrates, but this may not be physiologically important. Probably plays a role in initiation of 16S rRNA degradation (leading to ribosome degradation) during starvation. The chain is Ribonuclease PH from Cupriavidus necator (strain ATCC 17699 / DSM 428 / KCTC 22496 / NCIMB 10442 / H16 / Stanier 337) (Ralstonia eutropha).